Reading from the N-terminus, the 284-residue chain is L-ribulose-5-phosphate 3-epimerase UlaE (284 aa).

The protein belongs to the L-ribulose-5-phosphate 3-epimerase family.

The enzyme catalyses L-ribulose 5-phosphate = L-xylulose 5-phosphate. The protein operates within cofactor degradation; L-ascorbate degradation; D-xylulose 5-phosphate from L-ascorbate: step 3/4. Functionally, catalyzes the isomerization of L-xylulose-5-phosphate to L-ribulose-5-phosphate. Is involved in the anaerobic L-ascorbate utilization. In Escherichia coli O157:H7 (strain EC4115 / EHEC), this protein is L-ribulose-5-phosphate 3-epimerase UlaE.